The primary structure comprises 188 residues: Protease-associated domain-containing protein 1 (188 aa).

An N-terminal signal peptide occupies residues 1–21 (MSRGAAGWCCLVLWLPTCVAA). The PA domain maps to 83-163 (IQDQIALVER…RSLEQHGLPW (81 aa)). N-linked (GlcNAc...) asparagine glycosylation is found at Asn121 and Asn171.

In terms of processing, N-glycosylated; required for efficient secretion. Expressed in metabolically active tissues such as liver, muscle, adipose, and heart and different brain regions like cortex and hypothalamus, expression is acutely regulated by the nutritional state.

Its subcellular location is the secreted. Its function is as follows. Plays a role in the modulation of physical activity and adiposity. The chain is Protease-associated domain-containing protein 1 from Mus musculus (Mouse).